The following is a 589-amino-acid chain: Probable translation initiation factor IF-2 (589 aa).

In terms of domain architecture, tr-type G spans leucine 14–glutamate 229. The segment at glycine 23–threonine 30 is G1. GTP is bound at residue glycine 23–threonine 30. Residues glycine 48 to arginine 52 form a G2 region. The G3 stretch occupies residues aspartate 84–glycine 87. GTP-binding positions include aspartate 84–histidine 88 and asparagine 138–aspartate 141. A G4 region spans residues asparagine 138–aspartate 141. Positions serine 206–lysine 208 are G5.

Belongs to the TRAFAC class translation factor GTPase superfamily. Classic translation factor GTPase family. IF-2 subfamily.

Its function is as follows. Function in general translation initiation by promoting the binding of the formylmethionine-tRNA to ribosomes. Seems to function along with eIF-2. The chain is Probable translation initiation factor IF-2 (infB) from Thermoplasma acidophilum (strain ATCC 25905 / DSM 1728 / JCM 9062 / NBRC 15155 / AMRC-C165).